The following is a 218-amino-acid chain: Dehydration-responsive element-binding protein 1B (218 aa).

The segment at 1–26 (MEVEEAAYRTVWSEPPKRPAGRTKFR) is disordered. Residues 32–95 (VYRGVRRRGG…RGRAACLNFA (64 aa)) constitute a DNA-binding region (AP2/ERF). The interval 131-151 (SAAPSSPAETFANDGDEEEDN) is disordered.

This sequence belongs to the AP2/ERF transcription factor family. ERF subfamily.

Its subcellular location is the nucleus. In terms of biological role, transcriptional activator that binds specifically to the DNA sequence 5'-[AG]CCGAC-3'. Binding to the C-repeat/DRE element mediates high salinity- and dehydration-inducible transcription. Confers resistance to high salt, cold and drought stress. This Oryza sativa subsp. japonica (Rice) protein is Dehydration-responsive element-binding protein 1B (DREB1B).